A 363-amino-acid polypeptide reads, in one-letter code: MIIDTTEIETINSFSKLESLKEVYGIIWMLFPIFTLVLGITIGVLVIVWLEREISAGIQQRIGPEYAGPLGILQALADGTKLLLKENLIPSTGDTRLFSIGPSIAVISIFLSYSVIPFGDHLVLADLSIGVFFWIAISSIAPVGLLMSGYGSNNKYSFLGGLRAAAQSISYEIPLALCVLSISLLSNSSSTVDIVEAQSKYGFWGWNLWRQPIGFIVFLISSLAECERLPFDLPEAEEELVAGYQTEYSGIKFGLFYIASYLNLLVSSLFVTVLYLGGWNLSIPYIFVPELFGINKKGKVFGTLIGIFITLAKTYLFLFIPIATRWTLPRLRMDQLLNLGWKFLLPISLGNLLLTTSSQLLSL.

8 helical membrane passes run 30–50 (LFPI…IVWL), 98–118 (FSIG…VIPF), 127–147 (LSIG…GLLM), 165–185 (AAQS…ISLL), 203–223 (FWGW…ISSL), 248–268 (YSGI…LVSS), 300–320 (VFGT…FLFI), and 336–356 (LLNL…LLTT).

The protein belongs to the complex I subunit 1 family. As to quaternary structure, NDH is composed of at least 16 different subunits, 5 of which are encoded in the nucleus.

Its subcellular location is the plastid. It localises to the chloroplast thylakoid membrane. The enzyme catalyses a plastoquinone + NADH + (n+1) H(+)(in) = a plastoquinol + NAD(+) + n H(+)(out). It carries out the reaction a plastoquinone + NADPH + (n+1) H(+)(in) = a plastoquinol + NADP(+) + n H(+)(out). NDH shuttles electrons from NAD(P)H:plastoquinone, via FMN and iron-sulfur (Fe-S) centers, to quinones in the photosynthetic chain and possibly in a chloroplast respiratory chain. The immediate electron acceptor for the enzyme in this species is believed to be plastoquinone. Couples the redox reaction to proton translocation, and thus conserves the redox energy in a proton gradient. This Nicotiana tomentosiformis (Tobacco) protein is NAD(P)H-quinone oxidoreductase subunit 1, chloroplastic.